Consider the following 825-residue polypeptide: MENTLGEGSTVNASVDVDQHGNDNNSDSNANAAVAGVANTDTAGEESQQQDESLKDEATVPNTRDAESEAITVTAKQQPTMQANKLDSQETPSTEESRAQNVFGQDNEDSDNLFGETESSVSNNEANTPSIPTNPVDNENNKPAIKEDSTIQDSNGDVKNMEDVKIQKEEEPENNTVIEGVKEESQPDENTKEMDEVEEDDEDDDQPMISPDNSIFGDTKSESKQLGNTSSVANTPSEIPDAHKAEQEDIIEKTESVDKKVDSGEERNEQEREIMNDHSKSANPKKTTITRVEPETFEIPQAHEIVIPSYSKWFNLEKIHSIEVQSLPEFFTNRIPSKTPEVYMRYRNFMVNSYRLNPNEYFSVTTARRNVSGDAAALFRLHKFLTKWGLINYQVDSKLLPKNIEPPLTSQYSTRHDAPRGLFPFESYKPSVQLPDMAKLKKMMNTSDSESTLYKYLKESKRKYDEITHPPSTTDDENGDKNDNGGKMNNEVSTSTSMTGDANLLEEGETSRPLKKVKILEQIDENWSKEDLQKLLKGIQEFGADWYKVAKNVGNKSPEQCILRFLQLPIEDKFLYGDGNGKGDNDNGLGPLKYAPHLPFSKSENPVLSTIAFLVGLVNPKTVQSMTQRAIQSAESIKSQKEEISDQKPIEHIKEGSEIAISSLGYRSHIFATNEERQMNFLTNELIRLQMEKLDAKLNHLKKLEKFMELERKTLERQQENLLIQRLNFNQNSSKIVNVLSKCLNLISDSNINNSSVAEKEEIRSQIDHFKSMLSKPETLSIGKNPFNKPNIETGENHNGQSISNENDVKPISIEAPQFYRYWSA.

The segment covering 1-13 (MENTLGEGSTVNA) has biased composition (polar residues). A disordered region spans residues 1–285 (MENTLGEGST…NDHSKSANPK (285 aa)). Residues 22 to 42 (NDNNSDSNANAAVAGVANTDT) are compositionally biased toward low complexity. Polar residues-rich tracts occupy residues 74 to 104 (TAKQ…NVFG) and 117 to 138 (TESS…PVDN). Serine 88 carries the phosphoserine modification. Basic and acidic residues-rich tracts occupy residues 159 to 169 (KNMEDVKIQKE) and 180 to 194 (GVKE…TKEM). A Phosphoserine modification is found at serine 185. A compositionally biased stretch (acidic residues) spans 195–206 (DEVEEDDEDDDQ). Polar residues predominate over residues 224–237 (KQLGNTSSVANTPS). Threonine 235 carries the phosphothreonine modification. A compositionally biased stretch (basic and acidic residues) spans 240 to 280 (PDAHKAEQEDIIEKTESVDKKVDSGEERNEQEREIMNDHSK). The SWIRM domain maps to 305 to 402 (IVIPSYSKWF…YQVDSKLLPK (98 aa)). The disordered stretch occupies residues 464–509 (YDEITHPPSTTDDENGDKNDNGGKMNNEVSTSTSMTGDANLLEEGE). Positions 522–573 (QIDENWSKEDLQKLLKGIQEFGADWYKVAKNVGNKSPEQCILRFLQLPIEDK) constitute an SANT domain. The residue at position 657 (serine 657) is a Phosphoserine. The interval 694–722 (LDAKLNHLKKLEKFMELERKTLERQQENL) is leucine-zipper.

Interacts with RTT102, SWP82 and the N-terminus of SNF2. Component of the SWI/SNF global transcription activator complex. The 1.14 MDa SWI/SNF complex is composed of 11 different subunits: one copy each of SWI1, SNF2/SWI2, SNF5, SNF12/SWP73, ARP7/SWP61, ARP9/SWP59; two copies each of SWI3, SNF6, SNF11, SWP82; and three copies of TAF14/SWP29.

It is found in the nucleus. In terms of biological role, involved in transcriptional activation. Component of the SWI/SNF complex, an ATP-dependent chromatin-remodeling complex, which is required for the positive and negative regulation of gene expression of a large number of genes. It changes chromatin structure by altering DNA-histone contacts within a nucleosome, leading eventually to a change in nucleosome position, thus facilitating or repressing binding of gene-specific transcription factors. The protein is SWI/SNF complex subunit SWI3 (SWI3) of Saccharomyces cerevisiae (strain ATCC 204508 / S288c) (Baker's yeast).